Reading from the N-terminus, the 126-residue chain is Glycine cleavage system H protein (126 aa).

The region spanning 21–103 (TVTVGISDHA…YESGWIARIK (83 aa)) is the Lipoyl-binding domain. An N6-lipoyllysine modification is found at K62.

Belongs to the GcvH family. The glycine cleavage system is composed of four proteins: P, T, L and H. (R)-lipoate serves as cofactor.

Its function is as follows. The glycine cleavage system catalyzes the degradation of glycine. The H protein shuttles the methylamine group of glycine from the P protein to the T protein. The protein is Glycine cleavage system H protein of Aliivibrio fischeri (strain ATCC 700601 / ES114) (Vibrio fischeri).